The sequence spans 165 residues: MQLKFDHDLVLNQESINRIKEFSHSICSIDDIKKHGGRIITVGDVTTENLERAGLDIFIEVVDLKTKRGEKTYNHRENSISIENRPGTISLSLIRAIESSIKSNKKTRIEINGEEDLAVIPIIFYGDINTLVVYGVPDTGMACIFINTEIKSMVTDILRDLNGKT.

GTP is bound by residues aspartate 44, valine 45, aspartate 63, lysine 65, glutamate 115, and aspartate 138.

This sequence belongs to the GTP-dependent DPCK family.

The enzyme catalyses 3'-dephospho-CoA + GTP = GDP + CoA + H(+). It functions in the pathway cofactor biosynthesis; coenzyme A biosynthesis. Functionally, catalyzes the GTP-dependent phosphorylation of the 3'-hydroxyl group of dephosphocoenzyme A to form coenzyme A (CoA). In Picrophilus torridus (strain ATCC 700027 / DSM 9790 / JCM 10055 / NBRC 100828 / KAW 2/3), this protein is GTP-dependent dephospho-CoA kinase.